The chain runs to 591 residues: Trihelix transcription factor PTL (591 aa).

Positions 1-32 are disordered; sequence MDQDQHPQYGIPELRQLMKGGGRTTTTTPSTS. Residues 118–177 enclose the Myb-like 1 domain; sequence GRWPRQETLTLLEIRSRLDHKFKEANQKGPLWDEVSRIMSEEHGYQRSGKKCREKFENLY. The segment at 380–410 is disordered; that stretch reads CSSPEERTNGNNEIRNNSETQNENGSDQTMT. The segment covering 388–410 has biased composition (polar residues); that stretch reads NGNNEIRNNSETQNENGSDQTMT. Residues 422–479 enclose the Myb-like 2 domain; it reads WGEQEILKLMEIRTSMDSTFQEILGGCSDEFLWEEIAAKLIQLGFDQRSALLCKEKWE. The interval 491–551 is disordered; sequence QINKKRKDNS…SNANANANVT (61 aa). The span at 515–534 shows a compositional bias: polar residues; that stretch reads IYNNRESGYNDNDPHQINEQ. Positions 535–551 are enriched in low complexity; sequence GNVGSSTSNANANANVT.

Interacts with KIN10. Confined to flowers, at low levels. Also present in 7-days-old seedlings. Barely detectable in other tissues such as young seedlings, roots, stems, leaves and siliques. Expressed in flower primordia, more precisely between newly arisen sepal primordia and also at the basal margins of developing sepals.

Its subcellular location is the nucleus. In terms of biological role, transcription factor that prevents growth. Regulates perianth architecture in flower, mostly in the second whorl, probably by suppressing growth between initiating sepals, ensuring that they remain separate, and by modulating organ shapes. Required for the establishment of auxin flux. The sequence is that of Trihelix transcription factor PTL (PTL) from Arabidopsis thaliana (Mouse-ear cress).